A 539-amino-acid chain; its full sequence is Alpha-aminoadipic semialdehyde dehydrogenase (539 aa).

Residues 1 to 26 (MLRLARPLCVQTVKASKLSRLWSRPA) constitute a mitochondrion transit peptide. Residues Lys86, Lys94, and Lys97 each carry the N6-acetyllysine; alternate modification. Lys86, Lys94, and Lys97 each carry N6-succinyllysine; alternate. NAD(+) contacts are provided by residues 192-194 (TAF), Lys218, 258-259 (GT), 274-275 (GS), 274-279 (GSTQVG), and 296-297 (EL). Glu296 serves as the catalytic Proton acceptor. The Nucleophile role is filled by Cys330. Thr331 serves as a coordination point for (S)-2-amino-6-oxohexanoate. Glu427 contacts NAD(+). Lys462 bears the N6-acetyllysine mark. 2 residues coordinate (S)-2-amino-6-oxohexanoate: Gly489 and Ala490. Lys500 bears the N6-acetyllysine mark. N6-succinyllysine is present on Lys537.

Belongs to the aldehyde dehydrogenase family. In terms of assembly, homotetramer. In terms of tissue distribution, abundant in kidney, liver, cochlea and outer hair cells but not inner hair cells or vestibular type I hair cells. Very low levels in lung, brain, intestine and pancreas.

Its subcellular location is the cytoplasm. It localises to the cytosol. The protein localises to the nucleus. It is found in the mitochondrion. It catalyses the reaction nonanal + NAD(+) + H2O = nonanoate + NADH + 2 H(+). The enzyme catalyses (S)-2-amino-6-oxohexanoate + NAD(+) + H2O = L-2-aminoadipate + NADH + 2 H(+). The catalysed reaction is betaine aldehyde + NAD(+) + H2O = glycine betaine + NADH + 2 H(+). It carries out the reaction an aldehyde + NAD(+) + H2O = a carboxylate + NADH + 2 H(+). It catalyses the reaction hexanal + NAD(+) + H2O = hexanoate + NADH + 2 H(+). The enzyme catalyses octanal + NAD(+) + H2O = octanoate + NADH + 2 H(+). The catalysed reaction is (E)-non-2-enal + NAD(+) + H2O = (E)-non-2-enoate + NADH + 2 H(+). It carries out the reaction (E)-4-hydroxynon-2-enal + NAD(+) + H2O = (E)-4-hydroxynon-2-enoate + NADH + 2 H(+). It participates in amine and polyamine biosynthesis; betaine biosynthesis via choline pathway; betaine from betaine aldehyde: step 1/1. Multifunctional enzyme mediating important protective effects. Metabolizes betaine aldehyde to betaine, an important cellular osmolyte and methyl donor. Protects cells from oxidative stress by metabolizing a number of lipid peroxidation-derived aldehydes. Involved in lysine catabolism. This is Alpha-aminoadipic semialdehyde dehydrogenase from Rattus norvegicus (Rat).